The following is a 200-amino-acid chain: Small ribosomal subunit protein uS5 (200 aa).

Residues M1–D22 show a composition bias toward basic and acidic residues. The tract at residues M1–S26 is disordered. An S5 DRBM domain is found at L28–I91.

Belongs to the universal ribosomal protein uS5 family. In terms of assembly, part of the 30S ribosomal subunit. Contacts proteins S4 and S8.

In terms of biological role, with S4 and S12 plays an important role in translational accuracy. Located at the back of the 30S subunit body where it stabilizes the conformation of the head with respect to the body. The chain is Small ribosomal subunit protein uS5 from Hyphomonas neptunium (strain ATCC 15444).